A 315-amino-acid polypeptide reads, in one-letter code: Protein sprouty homolog 2 (315 aa).

Positions 1-14 are enriched in polar residues; the sequence is MEARAQSGSGSQPL. Disordered regions lie at residues 1–38 and 51–140; these read MEAR…PQQV and NTNE…GSSF. A compositionally biased stretch (basic and acidic residues) spans 20–32; that stretch reads DSGRQRGEPDPRD. Over residues 88-100 the composition is skewed to pro residues; sequence PRQPSRPQHPPAH. The segment covering 109 to 140 has biased composition (low complexity); it reads RSISTVSSGSRSSTRTSTSSSSSEQRLLGSSF. Residues 118–315 are required for interaction with CAV1; that stretch reads SRSSTRTSTS…VPPRNFEKPT (198 aa). An SPR domain is found at 177-291; sequence KCEDCGKCKC…CYDRVNRPGC (115 aa). The segment at 178 to 315 is required for interaction with TESK1; the sequence is CEDCGKCKCK…VPPRNFEKPT (138 aa).

This sequence belongs to the sprouty family. As to quaternary structure, forms heterodimers with SPRY1. Forms a tripartite complex containing GAB1, METTL13 and SPRY2. Within the complex interacts with METTL13. Interacts with RAF1. Interacts (via C-terminus) with TESK1 (via C-terminus); the interaction disrupts SPRY2 interaction with GRB2, potentially via disruption of SPRY2 serine dephosphorylation. Interacts with PPP2R1A/PP2A-A and PPP2CA/PP2A-C; the interaction with PPP2CA/PP2A-C is inhibited by interaction with TESK1, possibly by vesicular sequestration of SPRY2. Inhibition of the interaction with the serine/threonine-protein phosphatase 2A (PP2A) holoenzyme results in loss of PP2A-mediated dephosphorylation, resulting in the loss of SPRY2 interaction with GRB2. Interacts with GRB2. Interacts with CBL/C-CBL; the interaction inhibits CBL-mediated ubiquitination of EGFR. Interacts (via C-terminus) with CAV1 (via C-terminus). Post-translationally, cleaved at Pro-144 by the prolyl endopeptidase FAP (seprase) activity (in vitro).

Its subcellular location is the cytoplasm. The protein localises to the cytoskeleton. It is found in the cell projection. It localises to the ruffle membrane. In terms of biological role, antagonist of fibroblast growth factor (FGF) pathways via inhibition of FGF-mediated phosphorylation of ERK1/2. Thereby acts as an antagonist of FGF-induced retinal lens fiber differentiation, may inhibit limb bud outgrowth and may negatively modulate respiratory organogenesis. Inhibits TGFB-induced epithelial-to-mesenchymal transition in retinal lens epithelial cells. Inhibits CBL/C-CBL-mediated EGFR ubiquitination. The chain is Protein sprouty homolog 2 (SPRY2) from Bos taurus (Bovine).